Here is a 225-residue protein sequence, read N- to C-terminus: Ribosomal RNA large subunit methyltransferase E (225 aa).

S-adenosyl-L-methionine-binding residues include Gly-79, Trp-81, Asp-97, Asp-113, and Asp-137. The Proton acceptor role is filled by Lys-177.

Belongs to the class I-like SAM-binding methyltransferase superfamily. RNA methyltransferase RlmE family.

Its subcellular location is the cytoplasm. It carries out the reaction uridine(2552) in 23S rRNA + S-adenosyl-L-methionine = 2'-O-methyluridine(2552) in 23S rRNA + S-adenosyl-L-homocysteine + H(+). Specifically methylates the uridine in position 2552 of 23S rRNA at the 2'-O position of the ribose in the fully assembled 50S ribosomal subunit. The polypeptide is Ribosomal RNA large subunit methyltransferase E (Acidiphilium cryptum (strain JF-5)).